A 331-amino-acid polypeptide reads, in one-letter code: Ferrochelatase (331 aa).

2 residues coordinate Fe cation: histidine 187 and glutamate 286.

The protein belongs to the ferrochelatase family.

Its subcellular location is the cytoplasm. The catalysed reaction is heme b + 2 H(+) = protoporphyrin IX + Fe(2+). Its pathway is porphyrin-containing compound metabolism; protoheme biosynthesis; protoheme from protoporphyrin-IX: step 1/1. In terms of biological role, catalyzes the ferrous insertion into protoporphyrin IX. The polypeptide is Ferrochelatase (Legionella pneumophila (strain Corby)).